The chain runs to 78 residues: UPF0335 protein RBE_1185 (78 aa).

This sequence belongs to the UPF0335 family.

The sequence is that of UPF0335 protein RBE_1185 from Rickettsia bellii (strain RML369-C).